The following is a 173-amino-acid chain: RTX-III toxin-activating lysine-acyltransferase ApxIIC (173 aa).

Catalysis depends on residues H29 and D98.

This sequence belongs to the RTX toxin acyltransferase family. In terms of assembly, homodimer.

The protein localises to the cytoplasm. The enzyme catalyses a fatty acyl-[ACP] + L-lysyl-[protein] = N(6)-(fatty acyl)-L-lysyl-[protein] + holo-[ACP] + H(+). Its function is as follows. Protein-lysine acyltransferase that catalyzes fatty acylation of the protoxin, thereby converting it to the active toxin. The sequence is that of RTX-III toxin-activating lysine-acyltransferase ApxIIC (apxIIIC) from Actinobacillus pleuropneumoniae (Haemophilus pleuropneumoniae).